Reading from the N-terminus, the 81-residue chain is Acyl carrier protein (81 aa).

The region spanning 4–79 is the Carrier domain; sequence QEIFEKVQTI…QAVDFISQKV (76 aa). Serine 39 carries the O-(pantetheine 4'-phosphoryl)serine modification.

The protein belongs to the acyl carrier protein (ACP) family. 4'-phosphopantetheine is transferred from CoA to a specific serine of apo-ACP by AcpS. This modification is essential for activity because fatty acids are bound in thioester linkage to the sulfhydryl of the prosthetic group.

The protein localises to the plastid. The protein resides in the chloroplast. It participates in lipid metabolism; fatty acid biosynthesis. Its function is as follows. Carrier of the growing fatty acid chain in fatty acid biosynthesis. This Guillardia theta (Cryptophyte) protein is Acyl carrier protein.